The chain runs to 278 residues: Rhomboid protease GlpG (278 aa).

6 helical membrane passes run 95–115 (GPLTLSVMVLCIAIYILMQIV), 143–163 (AFLHFSLLHILFNLMWWWYLA), 170–190 (LGTGKLLVLTIVSALFSGWGQ), 192–212 (LFSGVNFGGLSGVVYALMGYV), 224–241 (ISLPRGLMAFSVLWLVAG), and 245–267 (ILGLSIANAAHVSGLIIGLLMAF). The Nucleophile role is filled by S202. Residue H255 is part of the active site.

The protein belongs to the peptidase S54 family.

The protein resides in the cell inner membrane. The catalysed reaction is Cleaves type-1 transmembrane domains using a catalytic dyad composed of serine and histidine that are contributed by different transmembrane domains.. Its function is as follows. Rhomboid-type serine protease that catalyzes intramembrane proteolysis. The polypeptide is Rhomboid protease GlpG (Yersinia enterocolitica serotype O:8 / biotype 1B (strain NCTC 13174 / 8081)).